The primary structure comprises 127 residues: Glycine cleavage system H protein (127 aa).

Residues 22–104 (KARIGITHFA…YEKAWMIVVE (83 aa)) enclose the Lipoyl-binding domain. At lysine 63 the chain carries N6-lipoyllysine.

The protein belongs to the GcvH family. The glycine cleavage system is composed of four proteins: P, T, L and H. (R)-lipoate is required as a cofactor.

In terms of biological role, the glycine cleavage system catalyzes the degradation of glycine. The H protein shuttles the methylamine group of glycine from the P protein to the T protein. Its function is as follows. Is also involved in protein lipoylation via its role as an octanoyl/lipoyl carrier protein intermediate. In Bacillus subtilis (strain 168), this protein is Glycine cleavage system H protein.